A 572-amino-acid chain; its full sequence is Dihydroxy-acid dehydratase (572 aa).

[2Fe-2S] cluster is bound at residue Cys57. Asp89 provides a ligand contact to Mg(2+). [2Fe-2S] cluster is bound at residue Cys130. The Mg(2+) site is built by Asp131 and Lys132. At Lys132 the chain carries N6-carboxylysine. Cys202 contacts [2Fe-2S] cluster. A Mg(2+)-binding site is contributed by Glu453. Residue Ser479 is the Proton acceptor of the active site.

Belongs to the IlvD/Edd family. Homodimer. Requires [2Fe-2S] cluster as cofactor. The cofactor is Mg(2+).

The enzyme catalyses (2R)-2,3-dihydroxy-3-methylbutanoate = 3-methyl-2-oxobutanoate + H2O. It carries out the reaction (2R,3R)-2,3-dihydroxy-3-methylpentanoate = (S)-3-methyl-2-oxopentanoate + H2O. It functions in the pathway amino-acid biosynthesis; L-isoleucine biosynthesis; L-isoleucine from 2-oxobutanoate: step 3/4. It participates in amino-acid biosynthesis; L-valine biosynthesis; L-valine from pyruvate: step 3/4. Functions in the biosynthesis of branched-chain amino acids. Catalyzes the dehydration of (2R,3R)-2,3-dihydroxy-3-methylpentanoate (2,3-dihydroxy-3-methylvalerate) into 2-oxo-3-methylpentanoate (2-oxo-3-methylvalerate) and of (2R)-2,3-dihydroxy-3-methylbutanoate (2,3-dihydroxyisovalerate) into 2-oxo-3-methylbutanoate (2-oxoisovalerate), the penultimate precursor to L-isoleucine and L-valine, respectively. The polypeptide is Dihydroxy-acid dehydratase (Streptococcus thermophilus (strain CNRZ 1066)).